A 451-amino-acid chain; its full sequence is UPF0210 protein NGO_1297 (451 aa).

It belongs to the UPF0210 family. As to quaternary structure, homodimer.

This Neisseria gonorrhoeae (strain ATCC 700825 / FA 1090) protein is UPF0210 protein NGO_1297.